Reading from the N-terminus, the 294-residue chain is N-acetylmuramic acid 6-phosphate etherase (294 aa).

The SIS domain maps to 56-219 (TSYSLRNGGR…STLSMVSVGK (164 aa)). The active-site Proton donor is E84. E115 is an active-site residue.

The protein belongs to the GCKR-like family. MurNAc-6-P etherase subfamily. As to quaternary structure, homodimer.

The enzyme catalyses N-acetyl-D-muramate 6-phosphate + H2O = N-acetyl-D-glucosamine 6-phosphate + (R)-lactate. It participates in amino-sugar metabolism; 1,6-anhydro-N-acetylmuramate degradation. It functions in the pathway amino-sugar metabolism; N-acetylmuramate degradation. Its pathway is cell wall biogenesis; peptidoglycan recycling. Functionally, specifically catalyzes the cleavage of the D-lactyl ether substituent of MurNAc 6-phosphate, producing GlcNAc 6-phosphate and D-lactate. Together with AnmK, is also required for the utilization of anhydro-N-acetylmuramic acid (anhMurNAc) either imported from the medium or derived from its own cell wall murein, and thus plays a role in cell wall recycling. In Francisella tularensis subsp. tularensis (strain SCHU S4 / Schu 4), this protein is N-acetylmuramic acid 6-phosphate etherase.